Reading from the N-terminus, the 201-residue chain is Ras-related protein Rab-9A (201 aa).

Ala2 is subject to N-acetylalanine. The GTP site is built by Gly17, Val18, Gly19, Lys20, Ser21, Ser22, Asp33, Ser34, His38, and Thr39. Ser21 lines the Mg(2+) pocket. The Switch 1 signature appears at 31–42 (KFDSQLFHTIGV). At Ser34 the chain carries Phosphoserine. The Mg(2+) site is built by Thr39 and Asp62. A Switch 2 motif is present at residues 64–78 (AGQERFRSLRTPFYR). GTP-binding residues include Gly65, Asn124, Lys125, Asp127, Ala155, and Lys156. Phosphoserine is present on Ser179. A Phosphothreonine modification is found at Thr187. S-geranylgeranyl cysteine attachment occurs at residues Cys200 and Cys201.

This sequence belongs to the small GTPase superfamily. Rab family. Interacts (preferentially in its GTP-bound form) with GCC2 (via its GRIP domain). Interacts (GTP-bound form) with SGSM1; the GDP-bound form has much lower affinity for SGSM1. Interacts with SGSM2. The GTP-bound form but not the GDP-bound form interacts with HPS4. The GTP-bound form but not the GDP-bound form interacts with BLOC-3 complex (heterodimer of HPS1 and HPS4) but does not interact with HPS1 alone. Interacts (GTP-bound form) with NDE1; two RAB9A-GTP molecules lie on the opposite sides of the NDE1 homodimer; the interaction leads to RAB9A-dynein motor tethering. Interacts (GTP-bound form) with NDEL1. Requires Mg(2+) as cofactor.

It localises to the cell membrane. Its subcellular location is the endoplasmic reticulum membrane. The protein localises to the golgi apparatus membrane. It is found in the late endosome. The protein resides in the cytoplasmic vesicle. It localises to the phagosome membrane. Its subcellular location is the phagosome. The protein localises to the cytoplasmic vesicle membrane. It is found in the melanosome. It carries out the reaction GTP + H2O = GDP + phosphate + H(+). With respect to regulation, regulated by guanine nucleotide exchange factors (GEFs) which promote the exchange of bound GDP for free GTP. Regulated by GTPase activating proteins (GAPs) which increase the GTP hydrolysis activity. Inhibited by GDP dissociation inhibitors (GDIs). In terms of biological role, the small GTPases Rab are key regulators of intracellular membrane trafficking, from the formation of transport vesicles to their fusion with membranes. Rabs cycle between an inactive GDP-bound form and an active GTP-bound form that is able to recruit to membranes different sets of downstream effectors directly responsible for vesicle formation, movement, tethering and fusion. RAB9A is involved in the transport of proteins between the endosomes and the trans-Golgi network (TGN). Specifically uses NDE1/NDEL1 as an effector to interact with the dynein motor complex in order to control retrograde trafficking of RAB9-associated late endosomes to the TGN. Involved in the recruitment of SGSM2 to melanosomes and is required for the proper trafficking of melanogenic enzymes TYR, TYRP1 and DCT/TYRP2 to melanosomes in melanocytes. This Mus musculus (Mouse) protein is Ras-related protein Rab-9A.